Consider the following 312-residue polypeptide: RNA binding protein fox-1 homolog 3 (312 aa).

The segment covering 1–29 (MAQPYPPAQYPPPPQNGIPAEYAPPPPHP) has biased composition (pro residues). Residues 1–104 (MAQPYPPAQY…KQQPKRLHVS (104 aa)) form a disordered region. The span at 49-87 (TPAQTHPEQPGSEASTQPIAGTQTVPQTDEAAQTDSQPL) shows a compositional bias: polar residues. One can recognise an RRM domain in the interval 100–175 (RLHVSNIPFR…RKIEVNNATA (76 aa)). Asymmetric dimethylarginine; alternate is present on R223. The residue at position 223 (R223) is an Omega-N-methylarginine; alternate. The residue at position 272 (R272) is an Asymmetric dimethylarginine.

Its subcellular location is the nucleus. The protein resides in the cytoplasm. In terms of biological role, pre-mRNA alternative splicing regulator. Regulates alternative splicing of RBFOX2 to enhance the production of mRNA species that are targeted for nonsense-mediated decay (NMD). This chain is RNA binding protein fox-1 homolog 3 (RBFOX3), found in Homo sapiens (Human).